The primary structure comprises 388 residues: Calreticulin (388 aa).

A signal peptide spans 1 to 17; the sequence is MQLSLLVGLVCFSAINA. Cys-103 and Cys-135 form a disulfide bridge. Residues Tyr-107, Lys-109, Tyr-126, and Asp-133 each coordinate an alpha-D-glucoside. 7 consecutive repeat copies span residues 189–200, 208–219, 225–236, 242–253, 257–267, 271–281, and 285–295. Residues 189–253 are 4 X approximate repeats; it reads AESGELEADW…DAKKPEDWDD (65 aa). Residues 193-282 form a disordered region; the sequence is ELEADWDFLP…WKPKQKKNPA (90 aa). The span at 205-215 shows a compositional bias: basic and acidic residues; that stretch reads KIKDPDAKKPE. Residues 216–227 are compositionally biased toward acidic residues; that stretch reads DWDEREFIDDED. The segment covering 228–249 has biased composition (basic and acidic residues); sequence DKKPEDWDKPEHIPDPDAKKPE. Over residues 250-259 the composition is skewed to acidic residues; sequence DWDDEMDGEW. The 3 X approximate repeats stretch occupies residues 257 to 295; the sequence is GEWEPPMVDNPEYKGEWKPKQKKNPAYKGKWIHPEIEIP. An alpha-D-glucoside is bound at residue Asp-315. The interval 349–388 is disordered; it reads REGEKKKGKKTKKQKKKEKNEKIKKEKMKKRKRANRKKKK. Basic residues-rich tracts occupy residues 354–365 and 373–388; these read KKGKKTKKQKKK and KEKM…KKKK.

Belongs to the calreticulin family.

The protein localises to the endoplasmic reticulum lumen. In terms of biological role, molecular calcium-binding chaperone promoting folding, oligomeric assembly and quality control in the ER via the calreticulin/calnexin cycle. This lectin may interact transiently with almost all of the monoglucosylated glycoproteins that are synthesized in the ER. This chain is Calreticulin (crt-1), found in Onchocerca volvulus.